A 257-amino-acid chain; its full sequence is UPF0246 protein CV_1250 (257 aa).

It belongs to the UPF0246 family.

In Chromobacterium violaceum (strain ATCC 12472 / DSM 30191 / JCM 1249 / CCUG 213 / NBRC 12614 / NCIMB 9131 / NCTC 9757 / MK), this protein is UPF0246 protein CV_1250.